The primary structure comprises 319 residues: Pectinesterase (319 aa).

Pyrrolidone carboxylic acid is present on Q1. 2 residues coordinate substrate: T83 and Q113. The Proton donor role is filled by D136. C150 and C170 form a disulfide bridge. The active-site Nucleophile is the D157. Residues R225 and W227 each coordinate substrate.

This sequence belongs to the pectinesterase family.

The protein resides in the secreted. It localises to the cell wall. It catalyses the reaction [(1-&gt;4)-alpha-D-galacturonosyl methyl ester](n) + n H2O = [(1-&gt;4)-alpha-D-galacturonosyl](n) + n methanol + n H(+). It functions in the pathway glycan metabolism; pectin degradation; 2-dehydro-3-deoxy-D-gluconate from pectin: step 1/5. Catalyzes the deesterification of methyl-esterified D-galactosiduronic acid units in pectic compounds. It participates in modulating cell wall during fruit ripening, cell wall extension during pollen germination, and in defense mechanisms against pathogens. The sequence is that of Pectinesterase from Daucus carota (Wild carrot).